Reading from the N-terminus, the 436-residue chain is Trigger factor (436 aa).

The PPIase FKBP-type domain occupies 161–246 (GDQLNIDFVG…VNSVSAPQLP (86 aa)).

This sequence belongs to the FKBP-type PPIase family. Tig subfamily.

It localises to the cytoplasm. The enzyme catalyses [protein]-peptidylproline (omega=180) = [protein]-peptidylproline (omega=0). Functionally, involved in protein export. Acts as a chaperone by maintaining the newly synthesized protein in an open conformation. Functions as a peptidyl-prolyl cis-trans isomerase. The protein is Trigger factor of Ectopseudomonas mendocina (strain ymp) (Pseudomonas mendocina).